Here is a 241-residue protein sequence, read N- to C-terminus: Fatty acid metabolism regulator protein (241 aa).

One can recognise an HTH gntR-type domain in the interval 11-79 (QSPAALAEEY…HGKPTKVNNI (69 aa)). Positions 39–58 (ERDLADKIGVTRTTLREVLQ) form a DNA-binding region, H-T-H motif.

In terms of assembly, homodimer.

Its subcellular location is the cytoplasm. Functionally, multifunctional regulator of fatty acid metabolism. In Haemophilus influenzae (strain 86-028NP), this protein is Fatty acid metabolism regulator protein.